The following is a 781-amino-acid chain: Molybdenum cofactor sulfurase (781 aa).

At lysine 246 the chain carries N6-(pyridoxal phosphate)lysine. Cysteine 413 is an active-site residue. Residues 619 to 781 enclose the MOSC domain; it reads GDAVAQWLSE…MTCGDVVIVE (163 aa). The residue at position 734 (serine 734) is a Phosphoserine.

The protein belongs to the class-V pyridoxal-phosphate-dependent aminotransferase family. MOCOS subfamily. Requires pyridoxal 5'-phosphate as cofactor.

The catalysed reaction is Mo-molybdopterin + L-cysteine + AH2 = thio-Mo-molybdopterin + L-alanine + A + H2O. The protein operates within cofactor biosynthesis; molybdopterin biosynthesis. Functionally, sulfurates the molybdenum cofactor. Sulfation of molybdenum is essential for xanthine dehydrogenase (XDH) and aldehyde oxidase (ADO) enzymes in which molybdenum cofactor is liganded by 1 oxygen and 1 sulfur atom in active form. This is Molybdenum cofactor sulfurase from Drosophila erecta (Fruit fly).